A 389-amino-acid chain; its full sequence is Curcumin synthase 1 (389 aa).

Residue Cys164 is part of the active site.

It belongs to the thiolase-like superfamily. Chalcone/stilbene synthases family. In terms of assembly, homodimer. In terms of tissue distribution, expressed in both the leaf and rhizome, with higher expression in the rhizome.

It catalyses the reaction (E)-feruloylacetyl-CoA + (E)-feruloyl-CoA + H2O = curcumin + CO2 + 2 CoA. It functions in the pathway secondary metabolite biosynthesis; flavonoid biosynthesis. Functionally, catalyzes the synthesis of curcumin by condensing feruloyl-CoA with a diketide-CoA in the curcuminoid biosynthesis. The chain is Curcumin synthase 1 (CURS1) from Curcuma longa (Turmeric).